Consider the following 535-residue polypeptide: Flavin-containing monooxygenase iboF (535 aa).

Residues 1 to 24 form the signal peptide; sequence MFSLRPTALVSLSVVLFSIQETLS. 60–65 contacts FAD; that stretch reads GAGPSG. N-linked (GlcNAc...) asparagine glycosylation is found at N134, N243, and N300. 307–312 lines the NADP(+) pocket; sequence GAAASG. Residues N356, N382, and N410 are each glycosylated (N-linked (GlcNAc...) asparagine).

Belongs to the FMO family. Requires FAD as cofactor.

The protein operates within secondary metabolite biosynthesis. In terms of biological role, flavin-containing monooxygenase; part of the gene cluster that mediates the biosynthesis of the psychoactive metabolites ibotenic acid and muscimol. The first committed step is glutamate hydroxylation by the 2-oxoglutarate-dependent dioxygenase iboH, and the last step is decarboxylation of ibotenic acid to muscimol by the decarboxylase iboD. The order of the intermediate reactions is somewhat ambiguous. IboA likely activates the carboxylic acid at position 5 to introduce an amide bond, and the flavin monooxygenase iboF generates the N-O bond. There are several options for the latter step. One option is that iboF directly hydroxylates the amide nitrogen formed by iboA to produce a hydroxamic acid species. Another option is that iboF hydroxylates an external N-containing compound, whose resulting N-O bond is subsequently introduced into the hydroxyglutamate scaffold. The paralogous PLP-dependent cystathionine gamma-synthase-like enzymes iboG1 and iboG2 are likely involved in substitution of the OH group at position 3 by the O-N moiety. The first cyclic intermediate is most probably tricholomic acid which is likely desaturated to ibotenic acid by the cytochrome P450 monooxygenase iboC. The sequence is that of Flavin-containing monooxygenase iboF from Amanita muscaria (strain Koide BX008).